The chain runs to 160 residues: Probable NADH dehydrogenase [ubiquinone] 1 beta subcomplex subunit 2, mitochondrial (160 aa).

This sequence belongs to the complex I NDUFB2 subunit family. Complex I is composed of 45 different subunits.

It localises to the mitochondrion inner membrane. Accessory subunit of the mitochondrial membrane respiratory chain NADH dehydrogenase (Complex I), that is believed not to be involved in catalysis. Complex I functions in the transfer of electrons from NADH to the respiratory chain. The immediate electron acceptor for the enzyme is believed to be ubiquinone. The polypeptide is Probable NADH dehydrogenase [ubiquinone] 1 beta subcomplex subunit 2, mitochondrial (Caenorhabditis briggsae).